The chain runs to 149 residues: Protein-export protein SecB 2 (149 aa).

The protein belongs to the SecB family. In terms of assembly, homotetramer, a dimer of dimers. One homotetramer interacts with 1 SecA dimer.

It is found in the cytoplasm. One of the proteins required for the normal export of preproteins out of the cell cytoplasm. It is a molecular chaperone that binds to a subset of precursor proteins, maintaining them in a translocation-competent state. It also specifically binds to its receptor SecA. The protein is Protein-export protein SecB 2 of Francisella tularensis subsp. tularensis (strain FSC 198).